We begin with the raw amino-acid sequence, 307 residues long: Ribosomal RNA small subunit methyltransferase H (307 aa).

Residues 32 to 34 (GGH), Asp52, Phe78, Asp100, and Gln107 each bind S-adenosyl-L-methionine.

This sequence belongs to the methyltransferase superfamily. RsmH family.

The protein localises to the cytoplasm. It carries out the reaction cytidine(1402) in 16S rRNA + S-adenosyl-L-methionine = N(4)-methylcytidine(1402) in 16S rRNA + S-adenosyl-L-homocysteine + H(+). Its function is as follows. Specifically methylates the N4 position of cytidine in position 1402 (C1402) of 16S rRNA. The polypeptide is Ribosomal RNA small subunit methyltransferase H (Coxiella burnetii (strain Dugway 5J108-111)).